A 362-amino-acid polypeptide reads, in one-letter code: Cobalt-precorrin-5B C(1)-methyltransferase (362 aa).

It belongs to the CbiD family.

It carries out the reaction Co-precorrin-5B + S-adenosyl-L-methionine = Co-precorrin-6A + S-adenosyl-L-homocysteine. It functions in the pathway cofactor biosynthesis; adenosylcobalamin biosynthesis; cob(II)yrinate a,c-diamide from sirohydrochlorin (anaerobic route): step 6/10. Catalyzes the methylation of C-1 in cobalt-precorrin-5B to form cobalt-precorrin-6A. In Burkholderia vietnamiensis (strain G4 / LMG 22486) (Burkholderia cepacia (strain R1808)), this protein is Cobalt-precorrin-5B C(1)-methyltransferase.